We begin with the raw amino-acid sequence, 139 residues long: MADKKSSPKKENPQDKTYAIVEASGKQFWLQPNRYYDFDRCQAEVDDVLTLENVLLLNDGKDLKLGKPYVKDAKVEIKVLEHRRGPKIIVYKMRPKKKTRRKNGHRQELTRVLVQSISIGSNTKKSKAVKTTASKVESD.

The protein belongs to the bacterial ribosomal protein bL21 family. Part of the 50S ribosomal subunit. Contacts protein L20.

In terms of biological role, this protein binds to 23S rRNA in the presence of protein L20. This chain is Large ribosomal subunit protein bL21, found in Prochlorococcus marinus (strain NATL1A).